A 1164-amino-acid chain; its full sequence is DNA-directed RNA polymerase 132 kDa polypeptide (1164 aa).

The protein belongs to the RNA polymerase beta chain family. In terms of assembly, the DNA-dependent RNA polymerase used for intermediate and late genes expression consists of eight subunits (147) kDa, (133) kDa, (35) kDa, (30) kDa, (22) kDa, (19) kDa, (18) kDa and (7) kDa totalling more than 500 kDa in mass. The same holoenzyme, with the addition of the transcription-specificity factor RAP94, is used for early gene expression.

It is found in the virion. The catalysed reaction is RNA(n) + a ribonucleoside 5'-triphosphate = RNA(n+1) + diphosphate. Functionally, part of the DNA-dependent RNA polymerase which catalyzes the transcription of viral DNA into RNA using the four ribonucleoside triphosphates as substrates. Responsible for the transcription of early, intermediate and late genes. DNA-dependent RNA polymerase associates with the early transcription factor (ETF), itself composed of D6 and A7, thereby allowing the early genes transcription. Late transcription, and probably also intermediate transcription, require newly synthesized RNA polymerase. This Cowpox virus (strain GRI-90 / Grishak) (CPV) protein is DNA-directed RNA polymerase 132 kDa polypeptide (RPO132).